We begin with the raw amino-acid sequence, 140 residues long: ATP synthase epsilon chain (140 aa).

It belongs to the ATPase epsilon chain family. F-type ATPases have 2 components, CF(1) - the catalytic core - and CF(0) - the membrane proton channel. CF(1) has five subunits: alpha(3), beta(3), gamma(1), delta(1), epsilon(1). CF(0) has three main subunits: a, b and c.

The protein resides in the cell inner membrane. Produces ATP from ADP in the presence of a proton gradient across the membrane. The protein is ATP synthase epsilon chain of Alkalilimnicola ehrlichii (strain ATCC BAA-1101 / DSM 17681 / MLHE-1).